A 94-amino-acid polypeptide reads, in one-letter code: Co-chaperonin GroES (94 aa).

Belongs to the GroES chaperonin family. As to quaternary structure, heptamer of 7 subunits arranged in a ring. Interacts with the chaperonin GroEL.

It localises to the cytoplasm. In terms of biological role, together with the chaperonin GroEL, plays an essential role in assisting protein folding. The GroEL-GroES system forms a nano-cage that allows encapsulation of the non-native substrate proteins and provides a physical environment optimized to promote and accelerate protein folding. GroES binds to the apical surface of the GroEL ring, thereby capping the opening of the GroEL channel. The protein is Co-chaperonin GroES of Desulfitobacterium hafniense (strain DSM 10664 / DCB-2).